A 44-amino-acid chain; its full sequence is MTTRNPNQPVSYPIFTVRWIAVHTLAVPSVFFLGAIAAMQFIHR.

A helical membrane pass occupies residues tryptophan 19–alanine 35. Heme is bound at residue histidine 23.

The protein belongs to the PsbE/PsbF family. In terms of assembly, heterodimer of an alpha subunit and a beta subunit. PSII is composed of 1 copy each of membrane proteins PsbA, PsbB, PsbC, PsbD, PsbE, PsbF, PsbH, PsbI, PsbJ, PsbK, PsbL, PsbM, PsbT, PsbX, PsbY, PsbZ, Psb30/Ycf12, peripheral proteins PsbO, CyanoQ (PsbQ), PsbU, PsbV and a large number of cofactors. It forms dimeric complexes. It depends on heme b as a cofactor.

The protein resides in the cellular thylakoid membrane. This b-type cytochrome is tightly associated with the reaction center of photosystem II (PSII). PSII is a light-driven water:plastoquinone oxidoreductase that uses light energy to abstract electrons from H(2)O, generating O(2) and a proton gradient subsequently used for ATP formation. It consists of a core antenna complex that captures photons, and an electron transfer chain that converts photonic excitation into a charge separation. This chain is Cytochrome b559 subunit beta, found in Cyanothece sp. (strain PCC 7425 / ATCC 29141).